A 52-amino-acid polypeptide reads, in one-letter code: MGDFGASKTLPKQCSALRKGGHVVMKDRPCKIVEMSTSKTGKHGSAKVHLVG.

At K42 the chain carries Hypusine.

Belongs to the eIF-5A family. In terms of processing, lys-42 undergoes hypusination, a unique post-translational modification that consists in the addition of a butylamino group from spermidine to lysine side chain, leading to the formation of the unusual amino acid hypusine. eIF-5As are the only known proteins to undergo this modification, which is essential for their function.

It is found in the cytoplasm. Its function is as follows. Translation factor that promotes translation elongation and termination, particularly upon ribosome stalling at specific amino acid sequence contexts. Binds between the exit (E) and peptidyl (P) site of the ribosome and promotes rescue of stalled ribosome: specifically required for efficient translation of polyproline-containing peptides as well as other motifs that stall the ribosome. Acts as a ribosome quality control (RQC) cofactor by joining the RQC complex to facilitate peptidyl transfer during CAT tailing step. The polypeptide is Eukaryotic translation initiation factor 5A (Schistosoma mansoni (Blood fluke)).